The sequence spans 211 residues: MLTIALSKGRILDDTLPLLAEAGIVPTENPDKSRKLIIPTTQDDVRLLIVRATDVPTYVEHGAADLGVAGKDVLMEYGGQGLYEPLDLRIALCKLMTAGRVGDVEPKGRLRVATKFVNVAKRYYAEQGRQVDIIKLYGSMELAPLIGLADKIIDVVDTGNTLRANGLEPQDFIADISSRLIVNKASMKMQHARIQALIDTLRKAVESRHRG.

It belongs to the ATP phosphoribosyltransferase family. Short subfamily. In terms of assembly, heteromultimer composed of HisG and HisZ subunits.

The protein resides in the cytoplasm. It carries out the reaction 1-(5-phospho-beta-D-ribosyl)-ATP + diphosphate = 5-phospho-alpha-D-ribose 1-diphosphate + ATP. It participates in amino-acid biosynthesis; L-histidine biosynthesis; L-histidine from 5-phospho-alpha-D-ribose 1-diphosphate: step 1/9. Functionally, catalyzes the condensation of ATP and 5-phosphoribose 1-diphosphate to form N'-(5'-phosphoribosyl)-ATP (PR-ATP). Has a crucial role in the pathway because the rate of histidine biosynthesis seems to be controlled primarily by regulation of HisG enzymatic activity. This is ATP phosphoribosyltransferase from Pseudomonas fluorescens (strain SBW25).